We begin with the raw amino-acid sequence, 430 residues long: Methylenetetrahydrofolate--tRNA-(uracil-5-)-methyltransferase TrmFO (430 aa).

Position 9–14 (9–14 (GAGLAG)) interacts with FAD.

This sequence belongs to the MnmG family. TrmFO subfamily. The cofactor is FAD.

Its subcellular location is the cytoplasm. The enzyme catalyses uridine(54) in tRNA + (6R)-5,10-methylene-5,6,7,8-tetrahydrofolate + NADH + H(+) = 5-methyluridine(54) in tRNA + (6S)-5,6,7,8-tetrahydrofolate + NAD(+). It catalyses the reaction uridine(54) in tRNA + (6R)-5,10-methylene-5,6,7,8-tetrahydrofolate + NADPH + H(+) = 5-methyluridine(54) in tRNA + (6S)-5,6,7,8-tetrahydrofolate + NADP(+). In terms of biological role, catalyzes the folate-dependent formation of 5-methyl-uridine at position 54 (M-5-U54) in all tRNAs. In Fervidobacterium nodosum (strain ATCC 35602 / DSM 5306 / Rt17-B1), this protein is Methylenetetrahydrofolate--tRNA-(uracil-5-)-methyltransferase TrmFO.